The following is a 358-amino-acid chain: Starch-binding domain-containing protein 1 (358 aa).

The Extracellular segment spans residues 1-6 (MGAVWS). The chain crosses the membrane as a helical span at residues 7 to 23 (ALLVGGGLAGALFVWLL). Topologically, residues 24 to 358 (RGGPGDTGKD…KVVHAWWGIH (335 aa)) are cytoplasmic. Residues 30-42 (TGKDGDAEQEKDA) show a composition bias toward basic and acidic residues. 2 disordered regions span residues 30–70 (TGKD…QELV) and 104–151 (SREV…SPMG). Over residues 50-66 (PGGHQSGSSGLSPGPSG) the composition is skewed to low complexity. Ser65 is subject to Phosphoserine. The segment covering 106 to 115 (EVCDNSREHV) has biased composition (basic and acidic residues). Ser117 bears the Phosphoserine mark. Positions 126–140 (PATSETSNSRSYSEV) are enriched in polar residues. 4 positions are modified to phosphoserine: Ser148, Ser175, Ser188, and Ser194. The LIR motif lies at 200 to 206 (HEEWEMV). Ser210, Ser211, and Ser220 each carry phosphoserine. Positions 258 to 357 (PAGSQQVSVR…DKVVHAWWGI (100 aa)) constitute a CBM20 domain.

As to quaternary structure, interacts with the ATG8 family proteins GABARAP and GABARAPL1. Interacts with several glycogen-associated proteins, such as GYS2 (liver glycogen synthase), GDE (glycogen debranching enzyme), GBE1 (glycogen branching enzyme 1) and EPM2A (Laforin). Post-translationally, ubiquitinated, which leads to proteasomal degradation. As to expression, expressed at high level in skeletal and cardiac muscles. Moderately expressed in liver and placenta. No expression is found in pancreas, kidney or lung. Present in skeletal muscle, heart and placenta (at protein level).

It is found in the preautophagosomal structure membrane. It localises to the endoplasmic reticulum membrane. Its subcellular location is the cell membrane. The protein localises to the sarcolemma. The protein resides in the T-tubule. Its function is as follows. Acts as a cargo receptor for glycogen. Delivers its cargo to an autophagic pathway called glycophagy, resulting in the transport of glycogen to lysosomes. The chain is Starch-binding domain-containing protein 1 from Homo sapiens (Human).